A 301-amino-acid chain; its full sequence is Acetyl-coenzyme A carboxylase carboxyl transferase subunit beta (301 aa).

The region spanning 25–294 is the CoA carboxyltransferase N-terminal domain; the sequence is LWIKCPETGE…SAANDMNGGA (270 aa).

The protein belongs to the AccD/PCCB family. As to quaternary structure, acetyl-CoA carboxylase is a heterohexamer composed of biotin carboxyl carrier protein (AccB), biotin carboxylase (AccC) and two subunits each of ACCase subunit alpha (AccA) and ACCase subunit beta (AccD).

It is found in the cytoplasm. It catalyses the reaction N(6)-carboxybiotinyl-L-lysyl-[protein] + acetyl-CoA = N(6)-biotinyl-L-lysyl-[protein] + malonyl-CoA. Its pathway is lipid metabolism; malonyl-CoA biosynthesis; malonyl-CoA from acetyl-CoA: step 1/1. In terms of biological role, component of the acetyl coenzyme A carboxylase (ACC) complex. Biotin carboxylase (BC) catalyzes the carboxylation of biotin on its carrier protein (BCCP) and then the CO(2) group is transferred by the transcarboxylase to acetyl-CoA to form malonyl-CoA. This is Acetyl-coenzyme A carboxylase carboxyl transferase subunit beta from Rhizobium etli (strain CIAT 652).